The sequence spans 958 residues: Coiled-coil domain-containing protein 33 (958 aa).

Positions 214–353 (SPEEPLIASQ…LVKPTESGKA (140 aa)) constitute a C2 domain. Polar residues predominate over residues 602–617 (SKDTVSSTMDLSTSTP). The segment at 602 to 628 (SKDTVSSTMDLSTSTPREAEEEPLVPE) is disordered. 2 coiled-coil regions span residues 632 to 774 (DTEM…LEDR) and 859 to 899 (FNLL…RLQE). The interval 899–958 (EQEKGFRHPSNSIIIEQPSALTHSMDLKQPSELEPLLPSSDSKLNKPLSPQKETANSQQT) is disordered. Composition is skewed to polar residues over residues 907–920 (PSNS…SALT) and 949–958 (QKETANSQQT).

The protein is Coiled-coil domain-containing protein 33 (CCDC33) of Homo sapiens (Human).